We begin with the raw amino-acid sequence, 282 residues long: NAD kinase (282 aa).

The Proton acceptor role is filled by D67. NAD(+) contacts are provided by residues 67–68, 140–141, H151, R170, D172, and 183–188; these read DG, NE, and TAYNLS.

It belongs to the NAD kinase family. The cofactor is a divalent metal cation.

The protein localises to the cytoplasm. It carries out the reaction NAD(+) + ATP = ADP + NADP(+) + H(+). Its function is as follows. Involved in the regulation of the intracellular balance of NAD and NADP, and is a key enzyme in the biosynthesis of NADP. Catalyzes specifically the phosphorylation on 2'-hydroxyl of the adenosine moiety of NAD to yield NADP. This is NAD kinase from Halobacterium salinarum (strain ATCC 700922 / JCM 11081 / NRC-1) (Halobacterium halobium).